The chain runs to 305 residues: Homoserine O-acetyltransferase (305 aa).

Cys-142 acts as the Acyl-thioester intermediate in catalysis. Substrate-binding residues include Lys-163 and Ser-192. The active-site Proton acceptor is the His-235. Glu-237 is an active-site residue. Arg-249 serves as a coordination point for substrate.

It belongs to the MetA family.

The protein resides in the cytoplasm. The catalysed reaction is L-homoserine + acetyl-CoA = O-acetyl-L-homoserine + CoA. Its pathway is amino-acid biosynthesis; L-methionine biosynthesis via de novo pathway; O-acetyl-L-homoserine from L-homoserine: step 1/1. Functionally, transfers an acetyl group from acetyl-CoA to L-homoserine, forming acetyl-L-homoserine. This is Homoserine O-acetyltransferase from Cereibacter sphaeroides (strain KD131 / KCTC 12085) (Rhodobacter sphaeroides).